Here is a 263-residue protein sequence, read N- to C-terminus: Hydroxyethylthiazole kinase (263 aa).

Met-45 serves as a coordination point for substrate. Positions 121 and 167 each coordinate ATP. Gly-194 lines the substrate pocket.

This sequence belongs to the Thz kinase family. The cofactor is Mg(2+).

It carries out the reaction 5-(2-hydroxyethyl)-4-methylthiazole + ATP = 4-methyl-5-(2-phosphooxyethyl)-thiazole + ADP + H(+). It functions in the pathway cofactor biosynthesis; thiamine diphosphate biosynthesis; 4-methyl-5-(2-phosphoethyl)-thiazole from 5-(2-hydroxyethyl)-4-methylthiazole: step 1/1. Its function is as follows. Catalyzes the phosphorylation of the hydroxyl group of 4-methyl-5-beta-hydroxyethylthiazole (THZ). The sequence is that of Hydroxyethylthiazole kinase from Vibrio parahaemolyticus serotype O3:K6 (strain RIMD 2210633).